The sequence spans 106 residues: CRISPR-associated endoribonuclease Cas2 (106 aa).

Residue D8 participates in Mg(2+) binding. Positions 86 to 106 are disordered; that stretch reads EEAAEAAVSYPGRSRKKARAG.

Belongs to the CRISPR-associated endoribonuclease Cas2 protein family. As to quaternary structure, homodimer, forms a heterotetramer with a Cas1 homodimer. It depends on Mg(2+) as a cofactor.

CRISPR (clustered regularly interspaced short palindromic repeat), is an adaptive immune system that provides protection against mobile genetic elements (viruses, transposable elements and conjugative plasmids). CRISPR clusters contain sequences complementary to antecedent mobile elements and target invading nucleic acids. CRISPR clusters are transcribed and processed into CRISPR RNA (crRNA). Functions as a ssRNA-specific endoribonuclease. Involved in the integration of spacer DNA into the CRISPR cassette. The protein is CRISPR-associated endoribonuclease Cas2 of Desulforudis audaxviator (strain MP104C).